The chain runs to 387 residues: Pyrophosphate--fructose 6-phosphate 1-phosphotransferase 3 (387 aa).

Position 15 (glycine 15) interacts with diphosphate. Aspartate 114 provides a ligand contact to Mg(2+). Residues 140-142 (TID), 186-188 (MGR), glutamate 247, and 308-311 (YELR) each bind substrate. Aspartate 142 acts as the Proton acceptor in catalysis.

Belongs to the phosphofructokinase type A (PFKA) family. PPi-dependent PFK group II subfamily. Clade 'Short' sub-subfamily. As to quaternary structure, homotetramer. Mg(2+) is required as a cofactor.

It is found in the cytoplasm. It catalyses the reaction beta-D-fructose 6-phosphate + diphosphate = beta-D-fructose 1,6-bisphosphate + phosphate + H(+). It functions in the pathway carbohydrate degradation; glycolysis; D-glyceraldehyde 3-phosphate and glycerone phosphate from D-glucose: step 3/4. Its activity is regulated as follows. Non-allosteric. Catalyzes the phosphorylation of D-fructose 6-phosphate, the first committing step of glycolysis. Uses inorganic phosphate (PPi) as phosphoryl donor instead of ATP like common ATP-dependent phosphofructokinases (ATP-PFKs), which renders the reaction reversible, and can thus function both in glycolysis and gluconeogenesis. Consistently, PPi-PFK can replace the enzymes of both the forward (ATP-PFK) and reverse (fructose-bisphosphatase (FBPase)) reactions. The protein is Pyrophosphate--fructose 6-phosphate 1-phosphotransferase 3 (pfk3) of Trichomonas vaginalis (strain ATCC PRA-98 / G3).